The chain runs to 122 residues: Large ribosomal subunit protein uL14 (122 aa).

Belongs to the universal ribosomal protein uL14 family. In terms of assembly, part of the 50S ribosomal subunit. Forms a cluster with proteins L3 and L19. In the 70S ribosome, L14 and L19 interact and together make contacts with the 16S rRNA in bridges B5 and B8.

Functionally, binds to 23S rRNA. Forms part of two intersubunit bridges in the 70S ribosome. The polypeptide is Large ribosomal subunit protein uL14 (Sulfurovum sp. (strain NBC37-1)).